Here is a 235-residue protein sequence, read N- to C-terminus: Large ribosomal subunit protein uL1 (235 aa).

It belongs to the universal ribosomal protein uL1 family. In terms of assembly, part of the 50S ribosomal subunit.

Binds directly to 23S rRNA. The L1 stalk is quite mobile in the ribosome, and is involved in E site tRNA release. In terms of biological role, protein L1 is also a translational repressor protein, it controls the translation of the L11 operon by binding to its mRNA. The polypeptide is Large ribosomal subunit protein uL1 (Desulfovibrio desulfuricans (strain ATCC 27774 / DSM 6949 / MB)).